We begin with the raw amino-acid sequence, 1577 residues long: Probable serine/threonine-protein kinase gdt9 (1577 aa).

Residues 1–16 form the signal peptide; the sequence is MKTFLLIFLLICVCKG. Residues 17–966 lie on the Extracellular side of the membrane; sequence ITNITTPSIY…NNEDNHKKLV (950 aa). A helical membrane pass occupies residues 967-987; that stretch reads IALSVSIPVAALLVILCFGIF. Residues 988-1577 lie on the Cytoplasmic side of the membrane; it reads ICYNNNKKNK…SLVKIFKRFN (590 aa). The span at 998-1014 shows a compositional bias: basic and acidic residues; that stretch reads NETKGKDIETNTDKKDD. Disordered regions lie at residues 998–1019 and 1050–1128; these read NETK…NENE and TLPP…FPTI. Positions 1050-1082 are enriched in polar residues; the sequence is TLPPQSTISIDTSPSSENTTFTESLTPKKSATV. Over residues 1091 to 1115 the composition is skewed to low complexity; sequence NSTNESTVSNSSSENNSDNNNNNNN. The Protein kinase domain occupies 1290–1573; the sequence is LDFDEICGQG…EIVFSLVKIF (284 aa). Residues 1296 to 1304 and Lys-1317 contribute to the ATP site; that span reads CGQGTYGMV. Asp-1436 serves as the catalytic Proton acceptor.

In the N-terminal section; belongs to the GDT family. This sequence in the C-terminal section; belongs to the protein kinase superfamily. TKL Ser/Thr protein kinase family.

It is found in the membrane. The enzyme catalyses L-seryl-[protein] + ATP = O-phospho-L-seryl-[protein] + ADP + H(+). It catalyses the reaction L-threonyl-[protein] + ATP = O-phospho-L-threonyl-[protein] + ADP + H(+). The sequence is that of Probable serine/threonine-protein kinase gdt9 (gdt9) from Dictyostelium discoideum (Social amoeba).